The chain runs to 254 residues: Chaperone protein PmfD (254 aa).

The N-terminal stretch at 1–26 (MNSFSTLKTLFCGSLLALSLVNTTQA) is a signal peptide.

The protein belongs to the periplasmic pilus chaperone family.

Its subcellular location is the periplasm. Involved in the biogenesis of the PMF fimbria. The chain is Chaperone protein PmfD (pmfD) from Proteus mirabilis (strain HI4320).